Consider the following 332-residue polypeptide: Heterogeneous nuclear ribonucleoprotein A/B (332 aa).

The tract at residues 1–66 (MSEAGEEQPM…DQINASKNEE (66 aa)) is disordered. Residues 29 to 49 (GRGWTGAAAGAGGATAAPPSG) show a composition bias toward low complexity. 2 consecutive RRM domains span residues 69 to 154 (GKMF…PVKK) and 153 to 233 (KKIF…QPKE). A Phosphoserine modification is found at serine 81. Glycyl lysine isopeptide (Lys-Gly) (interchain with G-Cter in SUMO2) cross-links involve residues lysine 130 and lysine 203. Lysine 215 is modified (N6-acetyllysine). The tract at residues 235–268 (YQQQQYGSGGRGNRNRGNRGSGGGGGGGGQSQSW) is disordered. Serine 242 carries the phosphoserine modification. Arginine 245 carries the dimethylated arginine; alternate modification. Omega-N-methylarginine; alternate is present on arginine 245. 4 positions are modified to omega-N-methylarginine: arginine 250, glycine 251, arginine 253, and glycine 254. Residues 253-264 (RGSGGGGGGGGQ) show a composition bias toward gly residues. A phosphoserine mark is found at serine 255 and glycine 256. N6-acetyllysine occurs at positions 271, 272, and 318. Residues 311–332 (QGSTNYGKSQRRGGHQNNYKPY) are disordered. Arginine 322 carries the dimethylated arginine; alternate modification. Arginine 322 carries the omega-N-methylarginine; alternate modification. Arginine 322 is subject to Asymmetric dimethylarginine; alternate.

As to quaternary structure, identified in a IGF2BP1-dependent mRNP granule complex containing untranslated mRNAs. Interacts with APOBEC1. Post-translationally, dimethylation at Arg-322 is probably asymmetric. Ubiquitous.

It is found in the nucleus. The protein localises to the cytoplasm. Its function is as follows. Binds single-stranded RNA. Has a high affinity for G-rich and U-rich regions of hnRNA. Also binds to APOB mRNA transcripts around the RNA editing site. This Homo sapiens (Human) protein is Heterogeneous nuclear ribonucleoprotein A/B (HNRNPAB).